We begin with the raw amino-acid sequence, 338 residues long: tRNA N6-adenosine threonylcarbamoyltransferase (338 aa).

Fe cation is bound by residues His111 and His115. Residues 134–138 (VVSGG), Asp167, Gly180, Asp184, and Asn272 contribute to the substrate site. Asp300 provides a ligand contact to Fe cation.

The protein belongs to the KAE1 / TsaD family. The cofactor is Fe(2+).

The protein localises to the cytoplasm. The enzyme catalyses L-threonylcarbamoyladenylate + adenosine(37) in tRNA = N(6)-L-threonylcarbamoyladenosine(37) in tRNA + AMP + H(+). Its function is as follows. Required for the formation of a threonylcarbamoyl group on adenosine at position 37 (t(6)A37) in tRNAs that read codons beginning with adenine. Is involved in the transfer of the threonylcarbamoyl moiety of threonylcarbamoyl-AMP (TC-AMP) to the N6 group of A37, together with TsaE and TsaB. TsaD likely plays a direct catalytic role in this reaction. The sequence is that of tRNA N6-adenosine threonylcarbamoyltransferase from Syntrophus aciditrophicus (strain SB).